Here is a 255-residue protein sequence, read N- to C-terminus: Phosphatidylcholine synthase (255 aa).

The Cytoplasmic segment spans residues 1–13 (MNPIKPPFTLNQY). The helical transmembrane segment at 14 to 34 (FAAWFVHVFTASAACIGVFSL) threads the bilayer. The Periplasmic segment spans residues 35 to 42 (YKIYQHDY). Residues 43–63 (VFALWLMAITVFIDAVDGSLA) traverse the membrane as a helical segment. Over 64 to 76 (RLVHVKSVLPKID) the chain is Cytoplasmic. Residues 77 to 97 (GALLDNIVDYLNYVITPCFFL) form a helical membrane-spanning segment. The Periplasmic segment spans residues 98-103 (LVKPGM). Residues 104-124 (LPADYVVPITAAITITSAYQF) form a helical membrane-spanning segment. The Cytoplasmic segment spans residues 125-133 (CQDDAKTPD). The helical transmembrane segment at 134-154 (HFFKGFPCYWNITVFYMYIFN) threads the bilayer. Thr155 is a topological domain (periplasmic). The helical transmembrane segment at 156-175 (SMIVNTVLLSLFCVLIFIPV) threads the bilayer. The Cytoplasmic portion of the chain corresponds to 176-190 (KYVYPSRLDYLTESR). A helical membrane pass occupies residues 191–211 (VLKILMHCCSALYGISSFCLL). Over 212-217 (VNYPET) the chain is Periplasmic. Residues 218-238 (NKLWVSLSLGYVGMYLFLSFY) traverse the membrane as a helical segment. Topologically, residues 239 to 255 (RTYYPMFKAKITANNKD) are cytoplasmic.

This sequence belongs to the CDP-alcohol phosphatidyltransferase class-I family. It depends on Mn(2+) as a cofactor.

It localises to the cell inner membrane. The enzyme catalyses a CDP-1,2-diacyl-sn-glycerol + choline = a 1,2-diacyl-sn-glycero-3-phosphocholine + CMP + H(+). Functionally, condenses choline with CDP-diglyceride to produce phosphatidylcholine and CMP. Affects virulence of this bacterium when there is a complete loss of phosphatidylcholine formation due to absence of both the synthase (pcs) and the methylation (pmtA) pathways. Reduced virulence results from lowered yields of bacteria within host macrophages and because of loss of high multiplicity cytotoxicity. The protein is Phosphatidylcholine synthase of Legionella pneumophila subsp. pneumophila (strain Philadelphia 1 / ATCC 33152 / DSM 7513).